Reading from the N-terminus, the 354-residue chain is L-Lys-D/L-Arg epimerase (354 aa).

Substrate is bound by residues T135 and 160–162 (KIK). Residues D190, E215, and D240 each contribute to the Mg(2+) site. Residues K265, D295, and 318 to 320 (DLD) contribute to the substrate site.

Belongs to the mandelate racemase/muconate lactonizing enzyme family. Mg(2+) serves as cofactor.

Functionally, catalyzes the epimerization of L-Lys-L-Arg to L-Lys-D-Arg (in vitro). Catalyzes the epimerization of positively charged dipeptides, with a preference for substrates with a basic amino acid in the second position. Has epimerase activity with L-Lys-L-Lys, L-Arg-L-Arg, L-Val-L-Arg, L-Val-L-Lys and L-Ala-L-Arg (in vitro). This Desulforapulum autotrophicum (strain ATCC 43914 / DSM 3382 / VKM B-1955 / HRM2) (Desulfobacterium autotrophicum) protein is L-Lys-D/L-Arg epimerase.